Reading from the N-terminus, the 146-residue chain is Angiogenin (146 aa).

The N-terminal stretch at M1–A24 is a signal peptide. Pyrrolidone carboxylic acid is present on Q25. Residue H37 is the Proton acceptor of the active site. R45 provides a ligand contact to tRNA. 3 cysteine pairs are disulfide-bonded: C50-C105, C63-C116, and C81-C131. Positions R55–L59 match the Nucleolar localization signal motif. Positions 105 and 127 each coordinate tRNA. H138 (proton donor) is an active-site residue.

It belongs to the pancreatic ribonuclease family. As to quaternary structure, homodimer. Interacts with RNH1; inhibiting ANG ribonuclease activity. Interacts with PCNA.

The protein localises to the secreted. It localises to the nucleus. Its subcellular location is the nucleolus. It is found in the cytoplasm. The protein resides in the stress granule. Has weak tRNA ribonuclease activity by itself due to partial autoinhibition by its C-terminus, which folds into a short alpha-helix that partially occludes the substrate-binding site. In absence of stress, the ribonuclease activity is inhibited by RNH1 in the cytoplasm. In response to stress, dissociates from RNH1 in the cytoplasm and associates with cytoplasmic ribosomes with vacant A-sites: ribosomes directly activate the tRNA ribonuclease activity of ANG by refolding the C-terminal alpha-helix. In response to stress, the angiogenic activity of ANG is inhibited by RNH1 in the nucleus. Functionally, secreted ribonuclease that can either promote or restrict cell proliferation of target cells, depending on the context. Endocytosed in target cells via its receptor PLXNB2 and translocates to the cytoplasm or nucleus. Under stress conditions, localizes to the cytoplasm and promotes the assembly of stress granules (SGs): specifically cleaves a subset of tRNAs within anticodon loops to produce tRNA-derived stress-induced fragments (tiRNAs), resulting in translation repression and inhibition of cell proliferation. tiRNas also prevent formation of apoptosome, thereby promoting cell survival. Preferentially cleaves RNAs between a pyrimidine and an adenosine residue, suggesting that it cleaves the anticodon loop of tRNA(Ala) (32-UUAGCAU-38) after positions 33 and 36. Cleaves a subset of tRNAs, including tRNA(Ala), tRNA(Glu), tRNA(Gly), tRNA(Lys), tRNA(Val), tRNA(His), tRNA(Asp) and tRNA(Sec). Under growth conditions and in differentiated cells, translocates to the nucleus and stimulates ribosomal RNA (rRNA) transcription, including that containing the initiation site sequences of 45S rRNA, thereby promoting cell growth and proliferation. Angiogenin induces vascularization of normal and malignant tissues via its ability to promote rRNA transcription. Involved in hematopoietic stem and progenitor cell (HSPC) growth and survival by promoting rRNA transcription in growth conditions and inhibiting translation in response to stress, respectively. Mediates the crosstalk between myeloid and intestinal epithelial cells to protect the intestinal epithelial barrier integrity: secreted by myeloid cells and promotes intestinal epithelial cells proliferation and survival. Also mediates osteoclast-endothelial cell crosstalk in growing bone: produced by osteoclasts and protects the neighboring vascular cells against senescence by promoting rRNA transcription. This chain is Angiogenin (ANG), found in Chlorocebus aethiops (Green monkey).